The sequence spans 166 residues: UPF0304 protein VIBHAR_01542 (166 aa).

The protein belongs to the UPF0304 family.

The protein is UPF0304 protein VIBHAR_01542 of Vibrio campbellii (strain ATCC BAA-1116).